Consider the following 341-residue polypeptide: NADH-quinone oxidoreductase subunit H 1 (341 aa).

Transmembrane regions (helical) follow at residues Leu-13–Ile-33, Gly-82–Ile-102, Val-115–Gly-135, Ile-161–Val-181, Met-190–Leu-210, Tyr-248–Pro-268, Trp-277–Met-297, and Leu-313–Leu-333.

The protein belongs to the complex I subunit 1 family. NDH-1 is composed of 14 different subunits. Subunits NuoA, H, J, K, L, M, N constitute the membrane sector of the complex.

Its subcellular location is the cell inner membrane. The enzyme catalyses a quinone + NADH + 5 H(+)(in) = a quinol + NAD(+) + 4 H(+)(out). Functionally, NDH-1 shuttles electrons from NADH, via FMN and iron-sulfur (Fe-S) centers, to quinones in the respiratory chain. The immediate electron acceptor for the enzyme in this species is believed to be ubiquinone. Couples the redox reaction to proton translocation (for every two electrons transferred, four hydrogen ions are translocated across the cytoplasmic membrane), and thus conserves the redox energy in a proton gradient. This subunit may bind ubiquinone. The sequence is that of NADH-quinone oxidoreductase subunit H 1 from Rhodopseudomonas palustris (strain ATCC BAA-98 / CGA009).